A 116-amino-acid polypeptide reads, in one-letter code: uncharacterized protein (116 aa).

Residues 2-73 form the N-acetylmuramoyl-L-alanine amidase domain; that stretch reads DGSVGTGRQV…PKALICGHRD (72 aa).

To phage T3 and T7 N-acetylmuramoyl-L-alanine amidases.

This is an uncharacterized protein from Haemophilus influenzae (strain ATCC 51907 / DSM 11121 / KW20 / Rd).